The primary structure comprises 719 residues: ATP-dependent RNA helicase p62 (719 aa).

A disordered region spans residues 94–234 (AQSQRAFRDS…GSQDLPMRPV (141 aa)). 2 stretches are compositionally biased toward basic and acidic residues: residues 99–108 (AFRDSSKPDS) and 137–171 (EEIKIEGVMAPHDRDFGHSGRGGRGGDRGGDDRRG). The segment covering 172–188 (GGGGGNRFGGGGGGGDY) has biased composition (gly residues). A compositionally biased stretch (basic and acidic residues) spans 194-205 (GRVEKRRDDRGG). Positions 206–226 (GNRFGGGGGFGDRRGGGGGGS) are enriched in gly residues. The Q motif motif lies at 281–309 (QDFSEVHLPDYVMKEIRRQGYKAPTAIQA). Positions 312 to 487 (WPIAMSGSNF…EDFLGNYIQI (176 aa)) constitute a Helicase ATP-binding domain. ATP is bound at residue 325 to 332 (AKTGSGKT). The short motif at 435–438 (DEAD) is the DEAD box element. Residues 519–664 (LLSDIYDTSE…EINPALENLA (146 aa)) enclose the Helicase C-terminal domain. The segment at 689-719 (GGGFKKGSLSNGRGFGGGGGGGGEGRHSRFD) is disordered. Residues 701–711 (RGFGGGGGGGG) show a composition bias toward gly residues.

The protein belongs to the DEAD box helicase family. DDX5/DBP2 subfamily. Interacts with Fmr1 to form the RNA-induced silencing complex (RISC), a ribonucleoprotein (RNP) complex involved in translation regulation, other components of the complex are RpL5, RpL11, AGO2 and Dcr-1.

Its subcellular location is the nucleus. The protein localises to the nucleolus. It localises to the cytoplasm. The protein resides in the cytosol. It carries out the reaction ATP + H2O = ADP + phosphate + H(+). Its function is as follows. As an RNA helicase, unwinds RNA and alters RNA structures through ATP binding and hydrolysis. Involved in multiple cellular processes, including pre-mRNA splicing, alternative splicing, rRNA processing and miRNA processing, as well as transcription regulation. Plays a role in innate immunity. Specifically restricts bunyavirus infection, including Rift Valley fever virus (RVFV) or La Crosse virus (LACV), but not vesicular stomatitis virus (VSV), in an interferon- and DROSHA-independent manner. This is ATP-dependent RNA helicase p62 (Rm62) from Drosophila melanogaster (Fruit fly).